Here is a 355-residue protein sequence, read N- to C-terminus: Peptide chain release factor 1 (355 aa).

Q231 carries the N5-methylglutamine modification. The span at 281-291 (ERLAKESEARK) shows a compositional bias: basic and acidic residues. The tract at residues 281 to 302 (ERLAKESEARKSQVGSGDRSER) is disordered.

This sequence belongs to the prokaryotic/mitochondrial release factor family. Methylated by PrmC. Methylation increases the termination efficiency of RF1.

It is found in the cytoplasm. In terms of biological role, peptide chain release factor 1 directs the termination of translation in response to the peptide chain termination codons UAG and UAA. This Campylobacter jejuni subsp. doylei (strain ATCC BAA-1458 / RM4099 / 269.97) protein is Peptide chain release factor 1.